The sequence spans 167 residues: uncharacterized protein (167 aa).

Positions 1–13 (MQGDIRRKKDLLP) are enriched in basic and acidic residues. 2 disordered regions span residues 1-26 (MQGD…SRRR) and 67-167 (ESHS…ILDN). Low complexity predominate over residues 71–80 (SDVSASASDH). Residues 102–156 (VPKEKFNNEVAKQQEVKNLENDLKPQIDSEKQKQINKDKKEQKQQLQKEKQDLAK) are compositionally biased toward basic and acidic residues.

This is an uncharacterized protein from Saccharomyces cerevisiae (strain ATCC 204508 / S288c) (Baker's yeast).